We begin with the raw amino-acid sequence, 102 residues long: MTITLAHYLILGAILFAIGIFGIFLNRRNLIILLMSIELMLLAVNMNFVAFSSWFGDTAGQVFVFFILTVAAAEAAIGLAILVLLFRNLNTINVDDLDRLKG.

3 consecutive transmembrane segments (helical) span residues 5 to 25 (LAHY…GIFL), 31 to 51 (IILL…FVAF), and 62 to 82 (VFVF…LAIL).

Belongs to the complex I subunit 4L family. NDH-1 is composed of 14 different subunits. Subunits NuoA, H, J, K, L, M, N constitute the membrane sector of the complex.

The protein resides in the cell inner membrane. The catalysed reaction is a quinone + NADH + 5 H(+)(in) = a quinol + NAD(+) + 4 H(+)(out). NDH-1 shuttles electrons from NADH, via FMN and iron-sulfur (Fe-S) centers, to quinones in the respiratory chain. The immediate electron acceptor for the enzyme in this species is believed to be ubiquinone. Couples the redox reaction to proton translocation (for every two electrons transferred, four hydrogen ions are translocated across the cytoplasmic membrane), and thus conserves the redox energy in a proton gradient. This Bordetella avium (strain 197N) protein is NADH-quinone oxidoreductase subunit K.